The chain runs to 122 residues: Large ribosomal subunit protein bL12 (122 aa).

This sequence belongs to the bacterial ribosomal protein bL12 family. In terms of assembly, homodimer. Part of the ribosomal stalk of the 50S ribosomal subunit. Forms a multimeric L10(L12)X complex, where L10 forms an elongated spine to which 2 to 4 L12 dimers bind in a sequential fashion. Binds GTP-bound translation factors.

In terms of biological role, forms part of the ribosomal stalk which helps the ribosome interact with GTP-bound translation factors. Is thus essential for accurate translation. In Staphylococcus haemolyticus (strain JCSC1435), this protein is Large ribosomal subunit protein bL12.